Here is a 235-residue protein sequence, read N- to C-terminus: Secretory carrier-associated membrane protein 5 (235 aa).

The Cytoplasmic portion of the chain corresponds to 1 to 39; the sequence is MAEKVNNFPPLPKFIPLKPCFYQDFEADIPPQHVSMTKR. Residues 40-60 traverse the membrane as a helical segment; the sequence is LYYLWMLNSVTLAVNLVGCLA. Residues 61–67 lie on the Extracellular side of the membrane; the sequence is WLIGGGG. The helical transmembrane segment at 68-88 threads the bilayer; that stretch reads ATNFGLAFLWLILFTPCSYVC. Over 89–102 the chain is Cytoplasmic; it reads WFRPIYKAFKTDSS. A helical membrane pass occupies residues 103–125; it reads FSFMAFFFTFMAQLVISIIQAVG. The Extracellular portion of the chain corresponds to 126–148; that stretch reads IPGWGVCGWIATISFFGTNIGSA. The helical transmembrane segment at 149 to 169 threads the bilayer; that stretch reads VVMLIPTVMFTVMAVFSFIAL. The Cytoplasmic portion of the chain corresponds to 170–235; the sequence is SMVHKFYRGS…TPNYTYSNEM (66 aa).

This sequence belongs to the SCAMP family. SCAMP5 subfamily. In terms of assembly, interacts (via C-terminal part) with SYT1 and SYT2; interaction with synaptotagmins making a link with the SNARE molecules. Interacts with SLC9A7. In terms of tissue distribution, expressed both by neuronal and non-neuronal tissues. Expressed in brain, stomach, thyroid, spinal cord, lymph node, trachea, adrenal gland, bone marrow and in the different parts of brain. In thyroid tissues, it is expressed by the follicular epithelial cells. In the adrenal gland tissues it is detected in the zona fasciculata of the cortex region (at protein level).

It localises to the cell membrane. The protein localises to the golgi apparatus membrane. Its subcellular location is the golgi apparatus. It is found in the trans-Golgi network membrane. The protein resides in the recycling endosome membrane. It localises to the cytoplasmic vesicle. The protein localises to the secretory vesicle. Its subcellular location is the synaptic vesicle membrane. Required for the calcium-dependent exocytosis of signal sequence-containing cytokines such as CCL5. Probably acts in cooperation with the SNARE machinery. May play a role in accumulation of expanded polyglutamine (polyQ) protein huntingtin (HTT) in case of endoplasmic reticulum stress by inhibiting the endocytosis pathway. The chain is Secretory carrier-associated membrane protein 5 (SCAMP5) from Homo sapiens (Human).